Consider the following 471-residue polypeptide: Methylenetetrahydrofolate--tRNA-(uracil-5-)-methyltransferase TrmFO (471 aa).

Residue 9–14 (GGGLSG) participates in FAD binding.

This sequence belongs to the MnmG family. TrmFO subfamily. The cofactor is FAD.

It localises to the cytoplasm. The catalysed reaction is uridine(54) in tRNA + (6R)-5,10-methylene-5,6,7,8-tetrahydrofolate + NADH + H(+) = 5-methyluridine(54) in tRNA + (6S)-5,6,7,8-tetrahydrofolate + NAD(+). The enzyme catalyses uridine(54) in tRNA + (6R)-5,10-methylene-5,6,7,8-tetrahydrofolate + NADPH + H(+) = 5-methyluridine(54) in tRNA + (6S)-5,6,7,8-tetrahydrofolate + NADP(+). Its function is as follows. Catalyzes the folate-dependent formation of 5-methyl-uridine at position 54 (M-5-U54) in all tRNAs. This chain is Methylenetetrahydrofolate--tRNA-(uracil-5-)-methyltransferase TrmFO, found in Beijerinckia indica subsp. indica (strain ATCC 9039 / DSM 1715 / NCIMB 8712).